The chain runs to 181 residues: Interleukin-24 (181 aa).

The first 26 residues, Met1–Gly26, serve as a signal peptide directing secretion. Cys34 and Cys81 are joined by a disulfide. Asn74 carries N-linked (GlcNAc...) asparagine glycosylation. Residue Lys97 forms a Glycyl lysine isopeptide (Lys-Gly) (interchain with G-Cter in ubiquitin) linkage.

This sequence belongs to the IL-10 family. Post-translationally, glycosylated. Ubiquitination at Lys-97 promotes proteasomal degradation. Selectively expressed by Th2 cells. Expressed in the liver.

It is found in the secreted. In terms of biological role, multifunctional cytokine mainly produced by T-cells that plays a regulatory role in immune response, tissue homeostasis, host defense, and oncogenesis. Possesses antiviral functions and induces the type I interferon response during influenza infection. Signals through two receptor complexes IL20RA/IL20RB or IL20RB/IL22RA1. In turn, stimulates the JAK1-STAT3 and MAPK pathways and promotes the secretion of pro-inflammatory mediators including IL8 and MMP1. Intracellularly, maintains endoplasmic reticulum homeostasis by restricting the eIF2alpha-CHOP pathway-mediated stress signal. In addition, acts as a quality control mechanism for the ubiquitin proteasome system by alerting the cell to proteasome dysfunction through activation of PKR/EIF2AK2. The chain is Interleukin-24 (Il24) from Mus musculus (Mouse).